Consider the following 356-residue polypeptide: Trans-enoyl reductase pgmF (356 aa).

NADP(+)-binding positions include Val-57–Lys-60, Ser-175–Cys-178, Ser-198–Asn-201, Tyr-216, Val-261–Gly-262, and Ala-342–Lys-343.

It belongs to the zinc-containing alcohol dehydrogenase family.

Functionally, FAD-linked oxidoreductase; part of the gene cluster that mediates the biosynthesis of pleosporalin A, ascomycone A, as well as a third cryptic naphthoquinone derived pigment, all responsible for the coloration of conidia. The pathway begins with the biosynthesis of the cyclized heptaketide 3-acetonyl-1,6,8-trihydroxy-2-naphthaldehyde by the NR-PKS pgmA. The C-6 hydroxyl group is further methylated by the O-methyltransferase pgmB to yield fusarubinaldehyde which is in turn oxidized by the cytochrome P450 monooxygenase pgmC at C-9. The C-1 hydroxyl group is then methylated spontaneously. Although pgmE, pgmD and pgmH are essential for the production of pleosporalin A, it is not the case for the 2 other final products and it remains difficult to assign a specific function to each enzyme. PgmF and pgmG seem not to be involved in pigment biosynthesis although they were regulated by the cluster-specific transcription factor pgmR. The polypeptide is Trans-enoyl reductase pgmF (Aspergillus terreus).